A 312-amino-acid chain; its full sequence is 4-hydroxyproline 2-epimerase (312 aa).

Residue Cys-88 is the Proton acceptor of the active site. Substrate is bound by residues 89–90 (GH), His-208, and Asp-234. Cys-238 acts as the Proton donor in catalysis. Residue 239 to 240 (GT) participates in substrate binding.

It belongs to the proline racemase family.

It carries out the reaction trans-4-hydroxy-L-proline = cis-4-hydroxy-D-proline. In terms of biological role, catalyzes the epimerization of trans-4-hydroxy-L-proline (t4LHyp) to cis-4-hydroxy-D-proline (c4DHyp). Is likely involved in a degradation pathway that converts t4LHyp to alpha-ketoglutarate. Can also catalyze the epimerization of trans-3-hydroxy-L-proline (t3LHyp) to cis-3-hydroxy-D-proline (c3DHyp), albeit with 500-fold lower efficiency. Displays no proline racemase activity. The protein is 4-hydroxyproline 2-epimerase of Xanthomonas campestris pv. campestris (strain ATCC 33913 / DSM 3586 / NCPPB 528 / LMG 568 / P 25).